Consider the following 359-residue polypeptide: Probable dual-specificity RNA methyltransferase RlmN (359 aa).

Glu100 (proton acceptor) is an active-site residue. Residues 106 to 340 (TDKRLTVCVS…VSVRASRGRD (235 aa)) enclose the Radical SAM core domain. The cysteines at positions 113 and 345 are disulfide-linked. Residues Cys120, Cys124, and Cys127 each contribute to the [4Fe-4S] cluster site. S-adenosyl-L-methionine contacts are provided by residues 167–168 (GE), Ser197, 226–228 (SLH), and Asn302. Residue Cys345 is the S-methylcysteine intermediate of the active site.

This sequence belongs to the radical SAM superfamily. RlmN family. The cofactor is [4Fe-4S] cluster.

It is found in the cytoplasm. The enzyme catalyses adenosine(2503) in 23S rRNA + 2 reduced [2Fe-2S]-[ferredoxin] + 2 S-adenosyl-L-methionine = 2-methyladenosine(2503) in 23S rRNA + 5'-deoxyadenosine + L-methionine + 2 oxidized [2Fe-2S]-[ferredoxin] + S-adenosyl-L-homocysteine. It catalyses the reaction adenosine(37) in tRNA + 2 reduced [2Fe-2S]-[ferredoxin] + 2 S-adenosyl-L-methionine = 2-methyladenosine(37) in tRNA + 5'-deoxyadenosine + L-methionine + 2 oxidized [2Fe-2S]-[ferredoxin] + S-adenosyl-L-homocysteine. Its function is as follows. Specifically methylates position 2 of adenine 2503 in 23S rRNA and position 2 of adenine 37 in tRNAs. In Prochlorococcus marinus (strain NATL2A), this protein is Probable dual-specificity RNA methyltransferase RlmN.